The following is a 1176-amino-acid chain: Pesticidal crystal protein Cry1Ag (1176 aa).

This sequence belongs to the delta endotoxin family.

In terms of biological role, promotes colloidosmotic lysis by binding to the midgut epithelial cells of many lepidopteran larvae. In Bacillus thuringiensis, this protein is Pesticidal crystal protein Cry1Ag (cry1Ag).